The sequence spans 231 residues: Ferritin light chain (231 aa).

Positions 1–19 are cleaved as a signal peptide; the sequence is MKMLILAVSCLLAITGSLA. An intrachain disulfide couples Cys23 to Cys43. The 159-residue stretch at 50 to 208 folds into the Ferritin-like diiron domain; sequence YGSHGNVATE…GHTSDLKKFI (159 aa). Asn134 carries N-linked (GlcNAc...) asparagine glycosylation.

Belongs to the ferritin family. Oligomer of 12 light (L) chains and 12 heavy (H) chains; L and H chains are disulfide-linked. The functional molecule forms a roughly spherical shell with a diameter of 12 nm and contains a central cavity into which the insoluble ferric iron core is deposited.

The protein localises to the golgi apparatus. Its subcellular location is the secreted. In terms of biological role, stores iron in a soluble, non-toxic, readily available form. Important for iron homeostasis. Iron is taken up in the ferrous form and deposited as ferric hydroxides after oxidation. Ferritin is composed of a heavy (H) chain which is responsible for the oxidation and uptake of ferrous iron, and a light (L) chain which facilitates the nucleation of the ferrihydrite iron core. The chain is Ferritin light chain from Trichoplusia ni (Cabbage looper).